Reading from the N-terminus, the 325-residue chain is 8-oxo-dGDP phosphatase NUDT18 (325 aa).

In terms of domain architecture, Nudix hydrolase spans asparagine 38–leucine 163. Residue leucine 55 participates in Mg(2+) binding. The Nudix box signature appears at glycine 73 to glycine 94.

Belongs to the Nudix hydrolase family. Mn(2+) serves as cofactor. Mg(2+) is required as a cofactor.

It catalyses the reaction 8-oxo-dGDP + H2O = 8-oxo-dGMP + phosphate + H(+). The enzyme catalyses 8-oxo-dADP + H2O = 8-oxo-dAMP + phosphate + H(+). It carries out the reaction 2-oxo-dADP + H2O = 2-oxo-dAMP + phosphate + H(+). The catalysed reaction is 8-oxo-GDP + H2O = 8-oxo-GMP + phosphate + H(+). Mediates the hydrolysis of oxidized nucleoside diphosphate derivatives. Hydrolyzes 8-oxo-7,8-dihydroguanine (8-oxo-Gua)-containing deoxyribo- and ribonucleoside diphosphates to the monophosphates. Hydrolyzes 8-oxo-dGDP and 8-oxo-GDP with the same efficiencies. Also hydrolyzes 8-OH-dADP and 2-OH-dADP. Exhibited no or minimal hydrolysis activity against 8-oxo-dGTP, 8-oxo-GTP, dGTP, GTP, dGDP and GDP. Probably removes oxidized guanine nucleotides from both the DNA and RNA precursor pools. This Danio rerio (Zebrafish) protein is 8-oxo-dGDP phosphatase NUDT18 (nudt18).